We begin with the raw amino-acid sequence, 473 residues long: Photosystem II CP43 reaction center protein (473 aa).

Residues 1–14 constitute a propeptide that is removed on maturation; it reads MKTLYSLRRFYHVE. Threonine 15 bears the N-acetylthreonine mark. Threonine 15 is modified (phosphothreonine). Transmembrane regions (helical) follow at residues 69-93, 134-155, 178-200, 255-275, and 291-312; these read LFEVAHFVPEKPMYEQGLILLPHLA, LLGPETLEESFPFFGYVWKDRN, KALYFGGIYDTWAPGGGDVRKIT, KPFAWARRALVWSGEAYLSYS, and WFNNTAYPSEFYGPTGPEASQA. Glutamate 367 is a binding site for [CaMn4O5] cluster. The helical transmembrane segment at 447–471 threads the bilayer; sequence RARAAAAGFEKGIDRDFEPVLSMTP.

It belongs to the PsbB/PsbC family. PsbC subfamily. PSII is composed of 1 copy each of membrane proteins PsbA, PsbB, PsbC, PsbD, PsbE, PsbF, PsbH, PsbI, PsbJ, PsbK, PsbL, PsbM, PsbT, PsbX, PsbY, PsbZ, Psb30/Ycf12, at least 3 peripheral proteins of the oxygen-evolving complex and a large number of cofactors. It forms dimeric complexes. Binds multiple chlorophylls and provides some of the ligands for the Ca-4Mn-5O cluster of the oxygen-evolving complex. It may also provide a ligand for a Cl- that is required for oxygen evolution. PSII binds additional chlorophylls, carotenoids and specific lipids. is required as a cofactor.

Its subcellular location is the plastid. It localises to the chloroplast thylakoid membrane. Its function is as follows. One of the components of the core complex of photosystem II (PSII). It binds chlorophyll and helps catalyze the primary light-induced photochemical processes of PSII. PSII is a light-driven water:plastoquinone oxidoreductase, using light energy to abstract electrons from H(2)O, generating O(2) and a proton gradient subsequently used for ATP formation. The protein is Photosystem II CP43 reaction center protein of Glycine max (Soybean).